The following is a 407-amino-acid chain: Peptidase T (407 aa).

Histidine 78 contacts Zn(2+). Aspartate 80 is a catalytic residue. A Zn(2+)-binding site is contributed by aspartate 139. Catalysis depends on glutamate 173, which acts as the Proton acceptor. Residues glutamate 174, aspartate 196, and histidine 378 each contribute to the Zn(2+) site.

The protein belongs to the peptidase M20B family. Zn(2+) serves as cofactor.

Its subcellular location is the cytoplasm. The enzyme catalyses Release of the N-terminal residue from a tripeptide.. In terms of biological role, cleaves the N-terminal amino acid of tripeptides. In Macrococcus caseolyticus (strain JCSC5402) (Macrococcoides caseolyticum), this protein is Peptidase T.